Consider the following 170-residue polypeptide: Cathelicidin antimicrobial peptide (170 aa).

The first 30 residues, 1–30, serve as a signal peptide directing secretion; sequence MKTQRHGPSLGRWSLVLLLLGLVMPLAIVA. A propeptide spans 31–131 (cathelin-like domain (CLD)); it reads QVLSYQEAVL…DISCDKDNRR (101 aa). Disulfide bonds link Cys-86-Cys-97 and Cys-108-Cys-125. Residues 150-162 form an active core region; sequence LKKIGQKIKDFLG.

The protein belongs to the cathelicidin family. Monomer, homodimer or homotrimer (in vitro). Oligomerizes as tetra- or hexamer in solution (in vitro). Post-translationally, proteolytically cleaved by proteinase PRTN3 into antibacterial peptide LL-37. Proteolytically cleaved by cathepsin CTSG and neutrophil elastase ELANE. In terms of processing, resistant to proteolytic degradation in solution, and when bound to both zwitterionic (mimicking mammalian membranes) and negatively charged membranes (mimicking bacterial membranes). After secretion onto the skin surface, the CAMP gene product is processed by a serine protease-dependent mechanism into multiple novel antimicrobial peptides distinct from and shorter than cathelicidin LL-37. These peptides show enhanced antimicrobial action, acquiring the ability to kill skin pathogens such as S.aureus, E.coli and C.albicans. These peptides have lost the ability to stimulate CXCL8/IL8 release from keratinocytes. The peptides act synergistically, killing bacteria at lower concentrations when present together, and maintain activity at increased salt condition.

The protein resides in the secreted. It localises to the vesicle. In terms of biological role, antimicrobial protein that is an integral component of the innate immune system. Binds to bacterial lipopolysaccharides (LPS). Acts via neutrophil N-formyl peptide receptors to enhance the release of CXCL2. Postsecretory processing generates multiple cathelicidin antimicrobial peptides with various lengths which act as a topical antimicrobial defense in sweat on skin. The unprocessed precursor form, cathelicidin antimicrobial peptide, inhibits the growth of Gram-negative E.coli and E.aerogenes with efficiencies comparable to that of the mature peptide LL-37 (in vitro). Its function is as follows. Antimicrobial peptide that is an integral component of the innate immune system. Binds to bacterial lipopolysaccharides (LPS). Causes membrane permeabilization by forming transmembrane pores (in vitro). Causes lysis of E.coli. Exhibits antimicrobial activity against Gram-negative bacteria such as P.aeruginosa, S.typhimurium, E.aerogenes, E.coli and P.syringae, Gram-positive bacteria such as L.monocytogenes, S.epidermidis, S.pyogenes and S.aureus, as well as vancomycin-resistant enterococci (in vitro). Exhibits antimicrobial activity against methicillin-resistant S.aureus, P.mirabilis, and C.albicans in low-salt media, but not in media containing 100 mM NaCl (in vitro). Forms chiral supramolecular assemblies with quinolone signal (PQS) molecules of P.aeruginosa, which may lead to interference of bacterial quorum signaling and perturbance of bacterial biofilm formation. May form supramolecular fiber-like assemblies on bacterial membranes. Induces cytokine and chemokine producation as well as TNF/TNFA and CSF2/GMCSF production in normal human keratinocytes. Exhibits hemolytic activity against red blood cells. Functionally, exhibits antimicrobial activity against E.coli and B.megaterium (in vitro). The sequence is that of Cathelicidin antimicrobial peptide from Trachypithecus obscurus (Dusky leaf-monkey).